A 240-amino-acid chain; its full sequence is Citrate synthase-lysine N-methyltransferase CSKMT, mitochondrial (240 aa).

The N-terminal 28 residues, 1–28 (MAALRRMLHLPSLMMGTCRPFAGSLADS), are a transit peptide targeting the mitochondrion.

Belongs to the methyltransferase superfamily.

The protein resides in the mitochondrion. It catalyses the reaction L-lysyl-[citrate synthase] + S-adenosyl-L-methionine = N(6)-methyl-L-lysyl-[citrate synthase] + S-adenosyl-L-homocysteine + H(+). It carries out the reaction N(6)-methyl-L-lysyl-[citrate synthase] + S-adenosyl-L-methionine = N(6),N(6)-dimethyl-L-lysyl-[citrate synthase] + S-adenosyl-L-homocysteine + H(+). The enzyme catalyses N(6),N(6)-dimethyl-L-lysyl-[citrate synthase] + S-adenosyl-L-methionine = N(6),N(6),N(6)-trimethyl-L-lysyl-[citrate synthase] + S-adenosyl-L-homocysteine + H(+). With respect to regulation, citrate synthase-lysine methyltransferase activity is inhibited by S-adenosylhomocysteine (AdoHcy) and oxaloacetate (OAA). Its function is as follows. Protein-lysine methyltransferase that selectively trimethylates citrate synthase (CS) in mitochondria. Seems to conduct trimethylation in a highly distributive manner rather than in a processive manner, and thus introduces a single methyl group per binding event. This chain is Citrate synthase-lysine N-methyltransferase CSKMT, mitochondrial, found in Homo sapiens (Human).